The primary structure comprises 131 residues: Transcription antitermination protein NusB (131 aa).

Belongs to the NusB family.

Involved in transcription antitermination. Required for transcription of ribosomal RNA (rRNA) genes. Binds specifically to the boxA antiterminator sequence of the ribosomal RNA (rrn) operons. The chain is Transcription antitermination protein NusB from Bacillus pumilus (strain SAFR-032).